We begin with the raw amino-acid sequence, 963 residues long: Glycine dehydrogenase (decarboxylating) (963 aa).

An N6-(pyridoxal phosphate)lysine modification is found at lysine 707.

It belongs to the GcvP family. As to quaternary structure, the glycine cleavage system is composed of four proteins: P, T, L and H. Pyridoxal 5'-phosphate serves as cofactor.

It carries out the reaction N(6)-[(R)-lipoyl]-L-lysyl-[glycine-cleavage complex H protein] + glycine + H(+) = N(6)-[(R)-S(8)-aminomethyldihydrolipoyl]-L-lysyl-[glycine-cleavage complex H protein] + CO2. The glycine cleavage system catalyzes the degradation of glycine. The P protein binds the alpha-amino group of glycine through its pyridoxal phosphate cofactor; CO(2) is released and the remaining methylamine moiety is then transferred to the lipoamide cofactor of the H protein. The sequence is that of Glycine dehydrogenase (decarboxylating) from Dechloromonas aromatica (strain RCB).